The sequence spans 246 residues: Uridylate kinase (246 aa).

K20–G23 provides a ligand contact to ATP. An involved in allosteric activation by GTP region spans residues G28–G33. G62 contributes to the UMP binding site. Residues G63 and R67 each coordinate ATP. UMP-binding positions include D82 and T143 to T150. ATP contacts are provided by T170, Y176, and D179.

Belongs to the UMP kinase family. As to quaternary structure, homohexamer.

The protein localises to the cytoplasm. The enzyme catalyses UMP + ATP = UDP + ADP. The protein operates within pyrimidine metabolism; CTP biosynthesis via de novo pathway; UDP from UMP (UMPK route): step 1/1. With respect to regulation, allosterically activated by GTP. Inhibited by UTP. Catalyzes the reversible phosphorylation of UMP to UDP. The polypeptide is Uridylate kinase (Cereibacter sphaeroides (strain ATCC 17023 / DSM 158 / JCM 6121 / CCUG 31486 / LMG 2827 / NBRC 12203 / NCIMB 8253 / ATH 2.4.1.) (Rhodobacter sphaeroides)).